A 297-amino-acid chain; its full sequence is Cbb3-type cytochrome c oxidase subunit CcoP (297 aa).

Residues 1–35 are Cytoplasmic-facing; that stretch reads MSKKPTTKKEVQTTGHSWDGIEELNTPLPRWWLWT. A helical transmembrane segment spans residues 36–56; it reads FYATIVWGVAYSIAMPAWPIF. At 57–297 the chain is on the periplasmic side; the sequence is ASGATPGILG…SYVHSLGGGQ (241 aa). Cytochrome c domains are found at residues 108–199 and 206–294; these read YTRN…LKIS and ARAT…HSLG. Heme c contacts are provided by Cys-121, Cys-124, His-125, Met-174, Cys-219, Cys-222, His-223, and Met-264.

The protein belongs to the CcoP / FixP family. Component of the cbb3-type cytochrome c oxidase at least composed of CcoN, CcoO, CcoQ and CcoP. Interacts with CcoH (via transmembrane domain). Heme c serves as cofactor.

The protein localises to the cell inner membrane. It functions in the pathway energy metabolism; oxidative phosphorylation. C-type cytochrome. Part of the cbb3-type cytochrome c oxidase complex. CcoP subunit is required for transferring electrons from donor cytochrome c via its heme groups to CcoO subunit. From there, electrons are shuttled to the catalytic binuclear center of CcoN subunit where oxygen reduction takes place. The complex also functions as a proton pump. This Rhodobacter capsulatus (strain ATCC BAA-309 / NBRC 16581 / SB1003) protein is Cbb3-type cytochrome c oxidase subunit CcoP.